The following is a 340-amino-acid chain: Protein RecA (340 aa).

Residue 65–72 participates in ATP binding; sequence GPESGGKT.

Belongs to the RecA family.

The protein localises to the cytoplasm. Can catalyze the hydrolysis of ATP in the presence of single-stranded DNA, the ATP-dependent uptake of single-stranded DNA by duplex DNA, and the ATP-dependent hybridization of homologous single-stranded DNAs. It interacts with LexA causing its activation and leading to its autocatalytic cleavage. This Thermus thermophilus (strain ATCC 27634 / DSM 579 / HB8) protein is Protein RecA.